The chain runs to 159 residues: Xanthine dehydrogenase iron-sulfur-binding subunit (159 aa).

Residues 7-82 form the 2Fe-2S ferredoxin-type domain; the sequence is ITIECTINGM…GKEIRTLEGE (76 aa). Residues Cys44, Cys49, and Cys52 each contribute to the [2Fe-2S] cluster site.

As to quaternary structure, heterotrimer of XdhA, XdhB and XdhC. [2Fe-2S] cluster is required as a cofactor.

The protein operates within purine metabolism; hypoxanthine degradation; urate from hypoxanthine: step 1/2. Iron-sulfur subunit of the xanthine dehydrogenase complex. This is Xanthine dehydrogenase iron-sulfur-binding subunit (xdhC) from Escherichia coli O157:H7.